The chain runs to 286 residues: Glycine--tRNA ligase alpha subunit (286 aa).

The protein belongs to the class-II aminoacyl-tRNA synthetase family. In terms of assembly, tetramer of two alpha and two beta subunits.

It is found in the cytoplasm. The catalysed reaction is tRNA(Gly) + glycine + ATP = glycyl-tRNA(Gly) + AMP + diphosphate. This Thermotoga maritima (strain ATCC 43589 / DSM 3109 / JCM 10099 / NBRC 100826 / MSB8) protein is Glycine--tRNA ligase alpha subunit (glyQ).